We begin with the raw amino-acid sequence, 209 residues long: Small ribosomal subunit protein uS3 (209 aa).

The KH type-2 domain occupies 38 to 107 (IRNFIKKNYN…KFGIDIIELK (70 aa)).

Belongs to the universal ribosomal protein uS3 family. In terms of assembly, part of the 30S ribosomal subunit. Forms a tight complex with proteins S10 and S14.

In terms of biological role, binds the lower part of the 30S subunit head. Binds mRNA in the 70S ribosome, positioning it for translation. This is Small ribosomal subunit protein uS3 from Fervidobacterium nodosum (strain ATCC 35602 / DSM 5306 / Rt17-B1).